Here is a 706-residue protein sequence, read N- to C-terminus: F-box/WD repeat-containing protein 7 (706 aa).

The disordered stretch occupies residues 1–157 (MNQELLSVGS…IVDLPIHQRS (157 aa)). Phosphoserine is present on Ser-26. The segment covering 32 to 54 (QMNRVLEEEQQQPRHQEEEHAAR) has biased composition (basic and acidic residues). Polar residues predominate over residues 69–83 (NDPQQGQLEENNNRF). Acidic residues predominate over residues 86-128 (VDEDSSGNQEEQEEDEEHAGEQDEEDEEEEEMDQESDDFDQSD). The span at 129–138 (DSSREDEHTH) shows a compositional bias: basic and acidic residues. A Phosphothreonine modification is found at Thr-204. Ser-226 is modified (phosphoserine). In terms of domain architecture, F-box spans 277-323 (RDFISLLPKELALYVLSFLEPKDLLQAAQTCRYWRILAEDNLLWREK). 7 WD repeats span residues 377 to 417 (GHDD…RTLV), 419 to 455 (HTGG…CIHT), 458 to 497 (GHTS…HVLM), 499 to 535 (HVAA…CLHT), 538 to 577 (GHTN…HTLT), 579 to 617 (HQSL…QTLQ), and 621 to 658 (KHQS…FIRN).

As to quaternary structure, homodimer; homodimerization plays a role in substrate binding and/or ubiquitination and degradation. Component of the SCF(FBXW7) complex consisting of CUL1, RBX1, SKP1 and FBXW7. Interacts (via F-box domain) with SKP1. Interacts (via F-box domain) with pseudophosphatase STYX; the interaction is direct and prevents FBXW7 interaction with SKP1. Interacts with cyclin-E (CCNE1 or CCNE2). Interacts with PSEN1. Forms a trimeric complex with NOTCH1 and SGK1. Interacts with NOTCH1 intracellular domain/NICD and NOTCH4 intracellular domain/NICD. Interacts with NOTCH2 intracellular domain (N2ICD). Interacts with MYC (when phosphorylated). Interacts with USP28, counteracting ubiquitination of MYC. Interacts with JUN. Found in a complex with JUN and PRR7. Interacts with JUN and PRR7; the interaction inhibits ubiquitination-mediated JUN degradation, promoting its phosphorylation and transcriptional activity. Interacts (when phosphorylated at Thr-204) with PIN1, disrupting FBXW7 dimerization and promoting FBXW7 autoubiquitination and degradation. Interacts with UBE2QL1. Interacts with FAM83D; promotes FBXW7 degradation. Interacts with MYCN; FBXW7 competes with AURKA for binding to unphosphorylated MYCN but not for binding to phosphorylated MYCN. Interacts with STOML1. Interacts with NFE2L1. Interacts with USP36, counteracting ubiquitination of MYC. Interacts with RICTOR; mediates RICTOR ubiquitination and degradation.l Interacts with USP38, counteracting ubiquitination of MYC. (Microbial infection) In case of infection, interacts with T.annulata PIN1 (TaPIN1); leading to FBXW7 autoubiquitination and subsequent degradation: FBXW7 degradation promotes stabilization of JUN, which promotes cell transformation. In terms of processing, phosphorylation at Thr-204 promotes interaction with PIN1, leading to disrupt FBXW7 dimerization and promoting FBXW7 autoubiquitination and degradation. Phosphorylated by ATM at Ser-26 in response to DNA damage, promoting recruitment to DNA damage sites and 'Lys-63'-linked ubiquitination of phosphorylated XRCC4. Ubiquitinated: autoubiquitinates following phosphorylation at Thr-204 and subsequent interaction with PIN1. Ubiquitination leads to its degradation.

The protein localises to the nucleus. It is found in the nucleoplasm. The protein resides in the chromosome. The protein operates within protein modification; protein ubiquitination. Its function is as follows. Substrate recognition component of a SCF (SKP1-CUL1-F-box protein) E3 ubiquitin-protein ligase complex which mediates the ubiquitination and subsequent proteasomal degradation of target proteins. Recognizes and binds phosphorylated sites/phosphodegrons within target proteins and thereafter brings them to the SCF complex for ubiquitination. Identified substrates include cyclin-E (CCNE1 or CCNE2), DISC1, JUN, MYC, NOTCH1 released notch intracellular domain (NICD), NOTCH2, MCL1, MLST8, RICTOR, and probably PSEN1. Acts as a negative regulator of JNK signaling by binding to phosphorylated JUN and promoting its ubiquitination and subsequent degradation. SCF(FBXW7) complex mediates the ubiquitination and subsequent degradation of NFE2L1. Involved in bone homeostasis and negative regulation of osteoclast differentiation. Also able to promote 'Lys-63'-linked ubiquitination in response to DNA damage. The SCF(FBXW7) complex facilitates double-strand break repair following phosphorylation by ATM: phosphorylation promotes localization to sites of double-strand breaks and 'Lys-63'-linked ubiquitination of phosphorylated XRCC4, enhancing DNA non-homologous end joining. This is F-box/WD repeat-containing protein 7 from Bos taurus (Bovine).